Consider the following 544-residue polypeptide: Protein angel homolog 2 (544 aa).

This sequence belongs to the CCR4/nocturin family.

The chain is Protein angel homolog 2 (ANGEL2) from Bos taurus (Bovine).